The sequence spans 314 residues: Aryldialkylphosphatase (314 aa).

Fe cation-binding residues include His22, His24, and Lys137. The Co(2+) site is built by Lys137, His170, and His199. At Lys137 the chain carries N6-carboxylysine. Asp256 serves as a coordination point for Fe cation.

Belongs to the metallo-dependent hydrolases superfamily. Phosphotriesterase family. As to quaternary structure, homodimer. Requires Co(2+) as cofactor. The cofactor is Fe cation.

It catalyses the reaction An aryl dialkyl phosphate + H2O = dialkyl phosphate + an aryl alcohol.. Its activity is regulated as follows. Inactivated by EDTA and o-phenanthroline. Its function is as follows. Has a low paraoxonase activity. Also active, but with a lower activity, against other organo-phosphorus insecticides such as Dursban, Coumaphos, pNP-butanoate or parathion. The protein is Aryldialkylphosphatase (php) of Saccharolobus solfataricus (strain ATCC 35092 / DSM 1617 / JCM 11322 / P2) (Sulfolobus solfataricus).